A 160-amino-acid polypeptide reads, in one-letter code: Transcriptional repressor NrdR (160 aa).

Positions 1–11 are enriched in polar residues; the sequence is MRCPNCNSLDT. Residues 1–20 are disordered; the sequence is MRCPNCNSLDTQVKDSRPTE. The segment at 3–34 is a zinc-finger region; the sequence is CPNCNSLDTQVKDSRPTEDSSVIRRRRVCIAC. The 91-residue stretch at 49-139 folds into the ATP-cone domain; sequence LTVIKRNGRR…VYRNFREAKD (91 aa).

Belongs to the NrdR family. Zn(2+) serves as cofactor.

In terms of biological role, negatively regulates transcription of bacterial ribonucleotide reductase nrd genes and operons by binding to NrdR-boxes. This chain is Transcriptional repressor NrdR, found in Rhodopseudomonas palustris (strain HaA2).